The primary structure comprises 477 residues: Bifunctional protein HldE (477 aa).

The tract at residues 1-318 (MQIQLPMFQN…RRAVQQEQGA (318 aa)) is ribokinase. Residue 195-198 (NLSE) participates in ATP binding. The active site involves D264. The segment at 344–477 (FTNGCFDIIH…VEKIRKDQVK (134 aa)) is cytidylyltransferase.

It in the N-terminal section; belongs to the carbohydrate kinase PfkB family. In the C-terminal section; belongs to the cytidylyltransferase family. Homodimer.

The enzyme catalyses D-glycero-beta-D-manno-heptose 7-phosphate + ATP = D-glycero-beta-D-manno-heptose 1,7-bisphosphate + ADP + H(+). It catalyses the reaction D-glycero-beta-D-manno-heptose 1-phosphate + ATP + H(+) = ADP-D-glycero-beta-D-manno-heptose + diphosphate. The protein operates within nucleotide-sugar biosynthesis; ADP-L-glycero-beta-D-manno-heptose biosynthesis; ADP-L-glycero-beta-D-manno-heptose from D-glycero-beta-D-manno-heptose 7-phosphate: step 1/4. It participates in nucleotide-sugar biosynthesis; ADP-L-glycero-beta-D-manno-heptose biosynthesis; ADP-L-glycero-beta-D-manno-heptose from D-glycero-beta-D-manno-heptose 7-phosphate: step 3/4. Functionally, catalyzes the phosphorylation of D-glycero-D-manno-heptose 7-phosphate at the C-1 position to selectively form D-glycero-beta-D-manno-heptose-1,7-bisphosphate. In terms of biological role, catalyzes the ADP transfer from ATP to D-glycero-beta-D-manno-heptose 1-phosphate, yielding ADP-D-glycero-beta-D-manno-heptose. This chain is Bifunctional protein HldE, found in Hahella chejuensis (strain KCTC 2396).